The primary structure comprises 178 residues: uncharacterized protein (178 aa).

The chain crosses the membrane as a helical span at residues 7–29 (FFVIFSILWGSLFLFSIIGSLGT).

The protein localises to the membrane. This is an uncharacterized protein from Bacillus subtilis (strain 168).